The sequence spans 186 residues: Intraflagellar transport protein 27 homolog (186 aa).

Residues 12 to 19, 64 to 68, and 123 to 126 each bind GTP; these read GDPAVGKT, DSAGK, and TKTD.

It belongs to the small GTPase superfamily. Rab family. As to quaternary structure, component of the IFT complex B, at least composed of IFT20, IFT22, IFT25, IFT27, IFT46, IFT52, TRAF3IP1/IFT54, IFT57, IFT74, IFT80, IFT81, and IFT88. Interacts with IFT25. Interacts with IFT70B. Interacts with RABL2/RABL2A; binding is equal in the presence of GTP or GDP. Interacts with IFT88. Interacts with ARL6; recognizes and binds with the GTP-free form of ARL6. As to expression, expressed predominantly in the testis (at protein level). Co-localizes with RABL2/RABL2A in the midpiece of elongated spermatids within the testis (at protein level).

The protein resides in the cell projection. The protein localises to the cilium. It localises to the cytoplasm. It is found in the flagellum. Functionally, small GTPase-like component of the intraflagellar transport (IFT) complex B that promotes the exit of the BBSome complex from cilia via its interaction with ARL6. Not involved in entry of the BBSome complex into cilium. Prevents aggregation of GTP-free ARL6. Required for hedgehog signaling. Forms a subcomplex within the IFT complex B with IFT25. Its role in intraflagellar transport is mainly seen in tissues rich in ciliated cells such as kidney and testis. Essential for male fertility, spermiogenesis and sperm flagella formation. Plays a role in the early development of the kidney. May be involved in the regulation of ureteric bud initiation. The sequence is that of Intraflagellar transport protein 27 homolog (Ift27) from Mus musculus (Mouse).